The chain runs to 578 residues: Phosphatase DCR2 (578 aa).

Gly116–Ser123 contributes to the ATP binding site.

Its subcellular location is the cytoplasm. Required for cell cycle progression. Has a role in the completion of START. The chain is Phosphatase DCR2 (DCR2) from Saccharomyces cerevisiae (strain ATCC 204508 / S288c) (Baker's yeast).